Reading from the N-terminus, the 91-residue chain is Small ribosomal subunit protein uS19 (91 aa).

Belongs to the universal ribosomal protein uS19 family.

Functionally, protein S19 forms a complex with S13 that binds strongly to the 16S ribosomal RNA. In Methylobacillus flagellatus (strain ATCC 51484 / DSM 6875 / VKM B-1610 / KT), this protein is Small ribosomal subunit protein uS19.